Reading from the N-terminus, the 264-residue chain is Thymidylate synthase (264 aa).

R21 is a binding site for dUMP. A (6R)-5,10-methylene-5,6,7,8-tetrahydrofolate-binding site is contributed by H51. Residue 126 to 127 coordinates dUMP; sequence RR. Catalysis depends on C146, which acts as the Nucleophile. DUMP contacts are provided by residues 166 to 169, N177, and 207 to 209; these read RSVD and HLY. Position 169 (D169) interacts with (6R)-5,10-methylene-5,6,7,8-tetrahydrofolate. A (6R)-5,10-methylene-5,6,7,8-tetrahydrofolate-binding site is contributed by A263.

The protein belongs to the thymidylate synthase family. Bacterial-type ThyA subfamily. In terms of assembly, homodimer.

It is found in the cytoplasm. It carries out the reaction dUMP + (6R)-5,10-methylene-5,6,7,8-tetrahydrofolate = 7,8-dihydrofolate + dTMP. It participates in pyrimidine metabolism; dTTP biosynthesis. Functionally, catalyzes the reductive methylation of 2'-deoxyuridine-5'-monophosphate (dUMP) to 2'-deoxythymidine-5'-monophosphate (dTMP) while utilizing 5,10-methylenetetrahydrofolate (mTHF) as the methyl donor and reductant in the reaction, yielding dihydrofolate (DHF) as a by-product. This enzymatic reaction provides an intracellular de novo source of dTMP, an essential precursor for DNA biosynthesis. The chain is Thymidylate synthase from Geobacillus kaustophilus (strain HTA426).